The primary structure comprises 204 residues: LexA repressor (204 aa).

Residues 28 to 48 (VREIGQAVGLASSSTVHGHLS) constitute a DNA-binding region (H-T-H motif). Catalysis depends on for autocatalytic cleavage activity residues S126 and K164.

The protein belongs to the peptidase S24 family. As to quaternary structure, homodimer.

The enzyme catalyses Hydrolysis of Ala-|-Gly bond in repressor LexA.. In terms of biological role, represses a number of genes involved in the response to DNA damage (SOS response), including recA and lexA. In the presence of single-stranded DNA, RecA interacts with LexA causing an autocatalytic cleavage which disrupts the DNA-binding part of LexA, leading to derepression of the SOS regulon and eventually DNA repair. The protein is LexA repressor of Bacillus mycoides (strain KBAB4) (Bacillus weihenstephanensis).